The primary structure comprises 483 residues: Docking protein 1 (483 aa).

Residue methionine 1 is modified to N-acetylmethionine. In terms of domain architecture, PH spans 4–119 (AVMEGPLFLQ…WVQTLCQNAF (116 aa)). At serine 48 the chain carries Phosphoserine. The region spanning 151–259 (EGSQFWVTVQ…HRQKIQGKAG (109 aa)) is the IRS-type PTB domain. 2 positions are modified to phosphoserine: serine 269 and serine 291. Positions 293 to 326 (PALYSEPLDSLRIPPGPSQDSLYSDPLDSTPARA) are disordered. Phosphotyrosine occurs at positions 296, 337, 362, 377, 398, and 409. The segment at 409 to 483 (YAVPPPRSTK…RTGAKSEGST (75 aa)) is disordered. Residues 411–424 (VPPPRSTKPFPAPK) show a composition bias toward pro residues. The residue at position 416 (serine 416) is a Phosphoserine. Residues 434–460 (GAATGSGSQGHSSDTALYSQVQKSGAS) are compositionally biased toward polar residues. Tyrosine 451 is subject to Phosphotyrosine. Serine 462 bears the Phosphoserine mark.

It belongs to the DOK family. Type A subfamily. Interacts with RasGAP, INPP5D/SHIP1 and ABL1. Interacts directly with phosphorylated ITGB3. Interacts with SRMS (via the SH2 and SH3 domains). In terms of processing, constitutively tyrosine-phosphorylated. Phosphorylated by TEC. Phosphorylated by LYN. Phosphorylated on tyrosine residues by the insulin receptor kinase. Results in the negative regulation of the insulin signaling pathway. Phosphorylated on tyrosine residues by SRMS.

The protein resides in the cytoplasm. It is found in the nucleus. Functionally, DOK proteins are enzymatically inert adaptor or scaffolding proteins. They provide a docking platform for the assembly of multimolecular signaling complexes. DOK1 appears to be a negative regulator of the insulin signaling pathway. Modulates integrin activation by competing with talin for the same binding site on ITGB3. The chain is Docking protein 1 (DOK1) from Bos taurus (Bovine).